A 206-amino-acid chain; its full sequence is Large ribosomal subunit protein uL4 (206 aa).

Residues 44–78 (RSGNRAQKDREQVKHTTKKPWRQKGTGRARAGMSS) form a disordered region. Over residues 58–70 (HTTKKPWRQKGTG) the composition is skewed to basic residues.

It belongs to the universal ribosomal protein uL4 family. As to quaternary structure, part of the 50S ribosomal subunit.

One of the primary rRNA binding proteins, this protein initially binds near the 5'-end of the 23S rRNA. It is important during the early stages of 50S assembly. It makes multiple contacts with different domains of the 23S rRNA in the assembled 50S subunit and ribosome. In terms of biological role, forms part of the polypeptide exit tunnel. The polypeptide is Large ribosomal subunit protein uL4 (Paraburkholderia phytofirmans (strain DSM 17436 / LMG 22146 / PsJN) (Burkholderia phytofirmans)).